We begin with the raw amino-acid sequence, 207 residues long: Small ribosomal subunit protein uS4 (207 aa).

The disordered stretch occupies residues 31 to 55; it reads KCKLDSKPGQHGRTSGARTSDYGTQ. Residues 42 to 53 show a composition bias toward polar residues; the sequence is GRTSGARTSDYG. The S4 RNA-binding domain maps to 97-160; that stretch reads SRLDNVVYRM…KKQARIVEAL (64 aa).

Belongs to the universal ribosomal protein uS4 family. Part of the 30S ribosomal subunit. Contacts protein S5. The interaction surface between S4 and S5 is involved in control of translational fidelity.

Functionally, one of the primary rRNA binding proteins, it binds directly to 16S rRNA where it nucleates assembly of the body of the 30S subunit. Its function is as follows. With S5 and S12 plays an important role in translational accuracy. This Burkholderia orbicola (strain MC0-3) protein is Small ribosomal subunit protein uS4.